A 242-amino-acid polypeptide reads, in one-letter code: MTVPTFLRKVTLREICVIEEYVDVQYRAIEALMDTLPSTDLVRLTVANALVSYQLSSSGEDWWREFSSYFRERRPRDIVREYARFLPRSRGNRRLIRQKLRRLHRAKAFLEELSWQDAKSYYRDMNRLRLDLARVLNADPESKTIVFTVKMFGYALRAITGRFRPYPFEIPIPVDARIERITRRITNDDPQLYWDSIARRTGIPPLHLDSILWVGTSRDPEVKRLLAKVLPKLIGELEMLGN.

8-oxoguanine contacts are provided by Q25, S52, and W63. The tract at residues 119 to 183 (KSYYRDMNRL…VDARIERITR (65 aa)) is helix-hairpin-helix. The active-site Schiff-base intermediate with DNA is the K143. Residues F147 and P173 each coordinate 8-oxoguanine. D175 is a catalytic residue. Residues D209 and W213 each contribute to the 8-oxoguanine site.

This sequence belongs to the archaeal N-glycosylase/DNA lyase (AGOG) family.

The enzyme catalyses 2'-deoxyribonucleotide-(2'-deoxyribose 5'-phosphate)-2'-deoxyribonucleotide-DNA = a 3'-end 2'-deoxyribonucleotide-(2,3-dehydro-2,3-deoxyribose 5'-phosphate)-DNA + a 5'-end 5'-phospho-2'-deoxyribonucleoside-DNA + H(+). DNA repair enzyme that is part of the base excision repair (BER) pathway; protects from oxidative damage by removing the major product of DNA oxidation, 8-oxoguanine (GO), from single- and double-stranded DNA substrates. This chain is N-glycosylase/DNA lyase, found in Methanopyrus kandleri (strain AV19 / DSM 6324 / JCM 9639 / NBRC 100938).